Here is a 264-residue protein sequence, read N- to C-terminus: tRNA (guanine-N(1)-)-methyltransferase (264 aa).

Residues Gly-116 and 136–141 each bind S-adenosyl-L-methionine; that span reads VGDFVL.

This sequence belongs to the RNA methyltransferase TrmD family. As to quaternary structure, homodimer.

The protein localises to the cytoplasm. It catalyses the reaction guanosine(37) in tRNA + S-adenosyl-L-methionine = N(1)-methylguanosine(37) in tRNA + S-adenosyl-L-homocysteine + H(+). Functionally, specifically methylates guanosine-37 in various tRNAs. This is tRNA (guanine-N(1)-)-methyltransferase from Koribacter versatilis (strain Ellin345).